We begin with the raw amino-acid sequence, 428 residues long: MGIKGLTKVLAEHAPRAAVQRRVEDYRGRVIAVDASLSIYQFLIVVGRKGSELLTNEAGEVTRQETSLALPVSDHCIPAYLTFHLCELCSHLQGMLNRTVRMLEAGIKPVFVFDGEPPEMKKKELAKRSLKRDDATKDLNRAIEIGDEDAVEKFSKRTVKVTRKHNDDCKRLLRLMGVPVVEAPGEAEAQCAALCENHQVYAVASEDMDSLTFGARRFLRHLTDLGYKKSPVTEFDVSKVLEELGLTMDQFIDLCILSGCDYCENIKGIGGQRALKLIRQHGCIEEVLQNLNQTRFSVPEDWPYQEVRTLFKEPNVSAGISDFTWTSPDTEGLMGFLSTENSFSPDRVTKAVEKIKAARDRYSPGRLKHLTPVASLPGTHTGKEPKCILGSPGQSLKLINYCSSSSTSNAGYRYTVDLSLLAFKGLIS.

The segment at 1-132 (MGIKGLTKVL…KELAKRSLKR (132 aa)) is N-domain. Aspartate 34 provides a ligand contact to Mg(2+). Arginine 98 serves as a coordination point for DNA. Mg(2+)-binding residues include aspartate 114, glutamate 186, glutamate 188, aspartate 207, and aspartate 209. Residues 150 to 281 (AVEKFSKRTV…QRALKLIRQH (132 aa)) form an I-domain region. Position 186 (glutamate 186) interacts with DNA. Residues glycine 259 and aspartate 261 each contribute to the DNA site. A Mg(2+)-binding site is contributed by aspartate 261.

The protein belongs to the XPG/RAD2 endonuclease family. FEN1 subfamily. As to quaternary structure, interacts with PCNA. Three molecules of FEN1 bind to one PCNA trimer with each molecule binding to one PCNA monomer. PCNA stimulates the nuclease activity without altering cleavage specificity. It depends on Mg(2+) as a cofactor. Phosphorylated. Phosphorylation upon DNA damage induces relocalization to the nuclear plasma.

It localises to the nucleus. The protein localises to the nucleolus. Its subcellular location is the nucleoplasm. The protein resides in the mitochondrion. Its function is as follows. Structure-specific nuclease with 5'-flap endonuclease and 5'-3' exonuclease activities involved in DNA replication and repair. During DNA replication, cleaves the 5'-overhanging flap structure that is generated by displacement synthesis when DNA polymerase encounters the 5'-end of a downstream Okazaki fragment. It enters the flap from the 5'-end and then tracks to cleave the flap base, leaving a nick for ligation. Also involved in the long patch base excision repair (LP-BER) pathway, by cleaving within the apurinic/apyrimidinic (AP) site-terminated flap. Acts as a genome stabilization factor that prevents flaps from equilibrating into structures that lead to duplications and deletions. Also possesses 5'-3' exonuclease activity on nicked or gapped double-stranded DNA, and exhibits RNase H activity. Also involved in replication and repair of rDNA and in repairing mitochondrial DNA. The sequence is that of Flap endonuclease 1-B from Sorghum bicolor (Sorghum).